Consider the following 164-residue polypeptide: RNA pyrophosphohydrolase (164 aa).

One can recognise a Nudix hydrolase domain in the interval 12-158; sequence RYRQCAGVML…KREVYRAVVK (147 aa). The short motif at 47 to 68 is the Nudix box element; it reads GGIDPGETQQEAAMRELEEETG.

Belongs to the Nudix hydrolase family. RppH subfamily. A divalent metal cation is required as a cofactor.

Functionally, accelerates the degradation of transcripts by removing pyrophosphate from the 5'-end of triphosphorylated RNA, leading to a more labile monophosphorylated state that can stimulate subsequent ribonuclease cleavage. The protein is RNA pyrophosphohydrolase of Erythrobacter litoralis (strain HTCC2594).